Reading from the N-terminus, the 172-residue chain is Peptidyl-prolyl cis-trans isomerase (172 aa).

The region spanning 10-168 (YFDVYANEES…YRIEIRDCGV (159 aa)) is the PPIase cyclophilin-type domain.

The protein belongs to the cyclophilin-type PPIase family.

The protein resides in the cytoplasm. It catalyses the reaction [protein]-peptidylproline (omega=180) = [protein]-peptidylproline (omega=0). PPIases accelerate the folding of proteins. They catalyze the cis-trans isomerization of proline imidic peptide bonds in oligopeptides. This chain is Peptidyl-prolyl cis-trans isomerase (CPR1), found in Encephalitozoon cuniculi (strain GB-M1) (Microsporidian parasite).